We begin with the raw amino-acid sequence, 208 residues long: MIDNTKIRSLLEKGLAEFKLDSIGDLLLDFLLLLNKWNKTYNLTAIRDIETMVSKHLFDSLAILPWIKGNHIIDVGTGPGLPGIPLAIAKPDLQFVLLDSNGKKIRFLNEVKRQLNIKNIEPIQIRVENYHPNQGFDTVISRAFSSLEQMIKWTQHLVAQDGLWLAMKGRFPDTELVPIHQTYRVERYAVPGIEGERCCVLINNTNKE.

S-adenosyl-L-methionine is bound by residues Gly76, Leu81, 127-128, and Arg142; that span reads VE.

This sequence belongs to the methyltransferase superfamily. RNA methyltransferase RsmG family.

The protein resides in the cytoplasm. The enzyme catalyses guanosine(527) in 16S rRNA + S-adenosyl-L-methionine = N(7)-methylguanosine(527) in 16S rRNA + S-adenosyl-L-homocysteine. Functionally, specifically methylates the N7 position of guanine in position 527 of 16S rRNA. This is Ribosomal RNA small subunit methyltransferase G from Legionella pneumophila subsp. pneumophila (strain Philadelphia 1 / ATCC 33152 / DSM 7513).